Here is a 33-residue protein sequence, read N- to C-terminus: Cytochrome b6-f complex subunit 8 (33 aa).

The chain crosses the membrane as a helical span at residues 2–22; sequence IFQIGWAALAAIFTFSIAMVV.

This sequence belongs to the PetN family. The 4 large subunits of the cytochrome b6-f complex are cytochrome b6, subunit IV (17 kDa polypeptide, PetD), cytochrome f and the Rieske protein, while the 4 small subunits are PetG, PetL, PetM and PetN. The complex functions as a dimer.

The protein localises to the cellular thylakoid membrane. In terms of biological role, component of the cytochrome b6-f complex, which mediates electron transfer between photosystem II (PSII) and photosystem I (PSI), cyclic electron flow around PSI, and state transitions. This chain is Cytochrome b6-f complex subunit 8, found in Prochlorococcus marinus (strain MIT 9301).